The chain runs to 779 residues: Anion/proton exchange transporter GEF1 (779 aa).

Topologically, residues 1–75 (MPTTYVPINQ…REVIWDRAKT (75 aa)) are cytoplasmic. A helical membrane pass occupies residues 76 to 96 (FITLSSTAIVIGCIAGFLQVF). At 97-154 (TETLVNWKTGHCQRNWLLNKSFCCNGVVNEVTSTSNLLLKRQEFECEAQGLWIAWKGH) the chain is on the lumenal side. Residues 155–175 (VSPFIIFMLLSVLFALISTLL) traverse the membrane as a helical segment. Residues 176–177 (VK) lie on the Cytoplasmic side of the membrane. Residues 178–198 (YVAPMATGSGISEIKVWVSGF) form a helical membrane-spanning segment. At 199-203 (EYNKE) the chain is on the lumenal side. Residues 204-224 (FLGFLTLVIKSVALPLAISSG) traverse the membrane as a helical segment. The Cytoplasmic segment spans residues 225–264 (LSVGKEGPSVHYATCCGYLLTKWLLRDTLTYSSQYEYITA). Residues 265–285 (ASGAGVAVAFGAPIGGVLFGL) traverse the membrane as a helical segment. Topologically, residues 286-296 (EEIASANRFNS) are lumenal. Residues 297-319 (STLWKSYYVALVAITTLKYIDPF) form a helical membrane-spanning segment. The Cytoplasmic portion of the chain corresponds to 320 to 336 (RNGRVILFNVTYDRDWK). The chain crosses the membrane as a helical span at residues 337–357 (VQEIPIFIALGIFGGLYGKYI). At 358 to 369 (SKWNINFIHFRK) the chain is on the lumenal side. A helical membrane pass occupies residues 370 to 390 (MYLSSWPVQEVLFLATLTALI). Topologically, residues 391-436 (SYFNEFLKLDMTESMGILFHECVKNDNTSTFSHRLCQLDENTHAFE) are cytoplasmic. Residues 437 to 457 (FLKIFTSLCFATVIRALLVVV) form a helical membrane-spanning segment. Residues 458 to 465 (SYGARVPA) lie on the Lumenal side of the membrane. Residues 466-486 (GIFVPSMAVGATFGRAVSLLV) traverse the membrane as a helical segment. Topologically, residues 487 to 500 (ERFISGPSVITPGA) are cytoplasmic. Residues 501–523 (YAFLGAAATLSGITNLTLTVVVI) form a helical membrane-spanning segment. At 524 to 529 (MFELTG) the chain is on the lumenal side. A helical membrane pass occupies residues 530–552 (AFMYIIPLMIVVAITRIILSTSG). Residues 553–779 (ISGGIADQMI…FTTNRNGNVI (227 aa)) lie on the Cytoplasmic side of the membrane. 2 consecutive CBS domains span residues 591–659 (MSSK…VNST) and 688–744 (MNES…YREV).

Belongs to the chloride channel (TC 2.A.49) family. Homodimer. Interacts with GET3. Proteolytically processed in the secretory pathway by protease KEX2 within the first extracellular loop. However, both the N- and C-terminal products of the cleavage reaction are required for assembly of a functional channel.

Its subcellular location is the golgi apparatus membrane. It localises to the endosome membrane. The protein resides in the prevacuolar compartment membrane. Its function is as follows. Anion/proton exchange transporter involved in iron and copper cation homeostasis. Involved in intracellular iron metabolism during growth on fermentable and non fermentable carbon sources. Required for proper copper-loading and maturation of multicopper oxidase FET3. Important for adjusting intracellular compartment pH to more alkaline pH under iron limitation. May also transport chloride ions through the plasma membrane. The polypeptide is Anion/proton exchange transporter GEF1 (GEF1) (Saccharomyces cerevisiae (strain ATCC 204508 / S288c) (Baker's yeast)).